The primary structure comprises 1080 residues: Histone deacetylase 4 (1080 aa).

3 disordered regions span residues 1–25 (MSSQ…PPRV), 132–165 (KLEQ…ESAV), and 205–312 (TQHS…ISAE). Over residues 132–162 (KLEQHRQEQELEKQHREQKLQQLKNKEKGKE) the composition is skewed to basic and acidic residues. Residues 205 to 224 (TQHSSLDQSSPPQSGVSGTY) show a composition bias toward polar residues. Composition is skewed to basic and acidic residues over residues 233-244 (DSKDDFPLRKTA) and 258-273 (KVAE…RKDG). The segment covering 289–312 (SACNSAPGSGPSSPNNSSNNISAE) has biased composition (low complexity). Residues 348–353 (PSLPNI) carry the PxLPxI/L motif. Disordered regions lie at residues 506–527 (KPNE…ELRE), 558–579 (EPIE…GQRQ), and 622–646 (PLSR…PTKP). Residues 509–527 (EPARQHESHPEETEEELRE) show a composition bias toward basic and acidic residues. A compositionally biased stretch (acidic residues) spans 560–571 (IESDEEEAEPQQ). The segment covering 625 to 637 (RAQSSPASATFPM) has biased composition (polar residues). The histone deacetylase stretch occupies residues 651–1080 (GLVYDTLMLK…DEPMEEEPPL (430 aa)). Zn(2+) is bound by residues Cys-663, Cys-665, His-671, and Cys-747. His-799 is a catalytic residue. The tract at residues 1055 to 1080 (MASLSVGVKPAEKRPDDEPMEEEPPL) is disordered.

The protein belongs to the histone deacetylase family. HD type 2 subfamily.

The protein localises to the nucleus. It carries out the reaction N(6)-acetyl-L-lysyl-[histone] + H2O = L-lysyl-[histone] + acetate. Responsible for the deacetylation of lysine residues on the N-terminal part of the core histones (H2A, H2B, H3 and H4). Histone deacetylation gives a tag for epigenetic repression and plays an important role in transcriptional regulation, cell cycle progression and developmental events. Histone deacetylases act via the formation of large multiprotein complexes. The sequence is that of Histone deacetylase 4 (HDAC4) from Gallus gallus (Chicken).